Here is a 307-residue protein sequence, read N- to C-terminus: Methionyl-tRNA formyltransferase (307 aa).

(6S)-5,6,7,8-tetrahydrofolate is bound at residue Ser-108 to Pro-111.

It belongs to the Fmt family.

The enzyme catalyses L-methionyl-tRNA(fMet) + (6R)-10-formyltetrahydrofolate = N-formyl-L-methionyl-tRNA(fMet) + (6S)-5,6,7,8-tetrahydrofolate + H(+). In terms of biological role, attaches a formyl group to the free amino group of methionyl-tRNA(fMet). The formyl group appears to play a dual role in the initiator identity of N-formylmethionyl-tRNA by promoting its recognition by IF2 and preventing the misappropriation of this tRNA by the elongation apparatus. This chain is Methionyl-tRNA formyltransferase, found in Xylella fastidiosa (strain 9a5c).